We begin with the raw amino-acid sequence, 512 residues long: UDP-N-acetylglucosamine--peptide N-acetylglucosaminyltransferase GtfA subunit (512 aa).

16–19 provides a ligand contact to UDP; it reads GVEY. Histidine 251 contributes to the N-acetyl-D-glucosamine binding site. UDP-binding positions include 393-394 and 413-416; these read QH and EGFG.

It belongs to the glycosyltransferase group 1 family. Glycosyltransferase 4 subfamily. Forms a heterotetramer with 2 subunits each of GtfA and GtfB. Part of the accessory SecA2/SecY2 protein translocation apparatus.

Its subcellular location is the cytoplasm. The protein resides in the cell membrane. It carries out the reaction L-seryl-[protein] + UDP-N-acetyl-alpha-D-glucosamine = 3-O-[N-acetyl-alpha-D-glucosaminyl]-L-seryl-[protein] + UDP + H(+). The protein operates within protein modification; protein glycosylation. In terms of biological role, required for polymorphic O-glycosylation of the serine-rich repeat protein (SRRP) in this bacteria. Catalyzes the first step in glycosylation by transferring N-acetylglucosamine from UDP-GlcNAc to serine residues in the substrate protein. Part of the accessory SecA2/SecY2 system specifically required to export serine-rich repeat cell wall proteins encoded in the same operon. The GtfA-GtfB complex adds GlcNAc from UDP-GlcNAc to SRRP (experimentally characterized with a truncated SSR1 construct); the alpha linkage was shown for this enzyme but not the residues glycosylated on SRRP. The protein is UDP-N-acetylglucosamine--peptide N-acetylglucosaminyltransferase GtfA subunit of Limosilactobacillus reuteri subsp. suis (strain ATCC 53608 / LMG 31752 / 1063) (Lactobacillus reuteri).